Here is a 322-residue protein sequence, read N- to C-terminus: Phosphate acetyltransferase (322 aa).

Belongs to the phosphate acetyltransferase and butyryltransferase family.

Its subcellular location is the cytoplasm. It catalyses the reaction acetyl-CoA + phosphate = acetyl phosphate + CoA. Its pathway is metabolic intermediate biosynthesis; acetyl-CoA biosynthesis; acetyl-CoA from acetate: step 2/2. The protein is Phosphate acetyltransferase (pta) of Mycoplasma capricolum subsp. capricolum (strain California kid / ATCC 27343 / NCTC 10154).